We begin with the raw amino-acid sequence, 609 residues long: Membrane-bound O-acyltransferase GUP2 (609 aa).

The N-terminal stretch at 1-18 (MSMLRIWSCIVHFFSVQA) is a signal peptide. At 19–75 (LDSRIKPDIEFKRRQRIFINSSKEENGSSSSAVTVTRNPVLSSNSPSPPLWNTWEFR) the chain is on the lumenal side. Residues 76-96 (LYYLAFTVVVPFMIKAALATS) form a helical membrane-spanning segment. Residues 97–133 (SESNPNYYKFSGLLAHGWILGRKVDNSDPQYRFFRSN) lie on the Cytoplasmic side of the membrane. The chain crosses the membrane as a helical span at residues 134-154 (FFLLAILILLQIILKKVFVKF). At 155-169 (SKIPKTKFDFACGLV) the chain is on the lumenal side. The helical transmembrane segment at 170-190 (FVCFMYGINSVKLFTHAFIFF) threads the bilayer. Residues 191-200 (TLAHSLKRKR) lie on the Cytoplasmic side of the membrane. A helical membrane pass occupies residues 201–221 (LIAAFAIWSYGIFTLFINQKM). Residues 222 to 324 (KNLPFNNIAI…VAEHHIQDYN (103 aa)) are Lumenal-facing. A helical membrane pass occupies residues 325 to 345 (FINFIAYITYAPLFLVGPIIT). Over 346 to 371 (FNDYLYQSENKLPSLTKKNIGFYALK) the chain is Cytoplasmic. The helical transmembrane segment at 372–392 (VFSSLLLMEIILHYIYVGAIA) threads the bilayer. Topologically, residues 393–406 (RTKAWNNDTPLQQA) are lumenal. The chain crosses the membrane as a helical span at residues 407–427 (MIALFNLNIMYLKLLIPWRLF). Topologically, residues 428–474 (RLWAMVDGIDAPENMLRCVDNNYSTVGFWRAWHTSFNKWVIRYIYVP) are cytoplasmic. Residues 475-495 (FGGSNNKILTSFAVFSFVAIW) traverse the membrane as a helical segment. The active site involves H496. The Lumenal portion of the chain corresponds to 496–502 (HDIQLRV). Residues 503–523 (LFWGWLTVLLLLGETYITNCF) form a helical membrane-spanning segment. Over 524–533 (SRYRFRSWYR) the chain is Cytoplasmic. A helical transmembrane segment spans residues 534-554 (FVCGIGAAINICMMMIINVYG). The Lumenal segment spans residues 555 to 575 (FCLGAEGTKLLLKGIFNNSHS). Residues 576-596 (PEFLTAVMVSLFIAVQVMFEI) form a helical membrane-spanning segment. At 597–609 (REEEKRHGINLKC) the chain is on the cytoplasmic side.

This sequence belongs to the membrane-bound acyltransferase family.

The protein resides in the endoplasmic reticulum membrane. In terms of biological role, probable membrane-bound O-acyltransferase. Together with GUP1, has an influence on the chemical composition of the yeast extracellular matrix (yECM) in yeast multicellular aggregates, such as biofilms and colonies. This chain is Membrane-bound O-acyltransferase GUP2 (GUP2), found in Saccharomyces cerevisiae (strain ATCC 204508 / S288c) (Baker's yeast).